Here is a 609-residue protein sequence, read N- to C-terminus: Arginine--tRNA ligase (609 aa).

Positions 132-142 (ANPTSSLHVGH) match the 'HIGH' region motif.

The protein belongs to the class-I aminoacyl-tRNA synthetase family. As to quaternary structure, monomer.

It is found in the cytoplasm. It carries out the reaction tRNA(Arg) + L-arginine + ATP = L-arginyl-tRNA(Arg) + AMP + diphosphate. The protein is Arginine--tRNA ligase of Psychrobacter arcticus (strain DSM 17307 / VKM B-2377 / 273-4).